Reading from the N-terminus, the 321-residue chain is Aspartate carbamoyltransferase catalytic subunit (321 aa).

Residues R65 and T66 each coordinate carbamoyl phosphate. L-aspartate is bound at residue K93. Carbamoyl phosphate is bound by residues R115, H143, and Q146. Positions 176 and 230 each coordinate L-aspartate. Carbamoyl phosphate is bound by residues G271 and P272.

Belongs to the aspartate/ornithine carbamoyltransferase superfamily. ATCase family. Heterododecamer (2C3:3R2) of six catalytic PyrB chains organized as two trimers (C3), and six regulatory PyrI chains organized as three dimers (R2).

The catalysed reaction is carbamoyl phosphate + L-aspartate = N-carbamoyl-L-aspartate + phosphate + H(+). It participates in pyrimidine metabolism; UMP biosynthesis via de novo pathway; (S)-dihydroorotate from bicarbonate: step 2/3. Catalyzes the condensation of carbamoyl phosphate and aspartate to form carbamoyl aspartate and inorganic phosphate, the committed step in the de novo pyrimidine nucleotide biosynthesis pathway. The sequence is that of Aspartate carbamoyltransferase catalytic subunit from Bartonella quintana (strain Toulouse) (Rochalimaea quintana).